We begin with the raw amino-acid sequence, 437 residues long: C-terminal-binding protein 2 (437 aa).

Residues serine 103, 183–188, aspartate 207, 240–246, 267–269, and aspartate 293 contribute to the NAD(+) site; these read IGLGRI, CNLNEHN, and TAR. Arginine 269 is a catalytic residue. The active site involves glutamate 298. Histidine 318 functions as the Proton donor in the catalytic mechanism. NAD(+) is bound at residue 318-321; sequence HTAW. The tract at residues 410–437 is disordered; that stretch reads PLIPSVSHTPSPGQTTKPDPDREIPTDQ. The span at 415 to 426 shows a compositional bias: polar residues; sequence VSHTPSPGQTTK. A compositionally biased stretch (basic and acidic residues) spans 427–437; that stretch reads PDPDREIPTDQ.

The protein belongs to the D-isomer specific 2-hydroxyacid dehydrogenase family. In terms of assembly, interacts with the C-terminus of tcf7l1-a via the consensus motifs P-X-[DNS]-L-[STVA].

The protein localises to the nucleus. In terms of biological role, corepressor targeting diverse transcription regulators. The sequence is that of C-terminal-binding protein 2 (ctbp2) from Xenopus laevis (African clawed frog).